We begin with the raw amino-acid sequence, 63 residues long: Jingdongin-1-MT1 (63 aa).

A signal peptide spans M1 to C22. Residues E23–E44 constitute a propeptide, removed in mature form. The cysteines at positions 57 and 63 are disulfide-linked.

The protein belongs to the frog skin active peptide (FSAP) family. Brevinin subfamily. As to expression, expressed by the skin glands.

The protein resides in the secreted. In terms of biological role, antimicrobial peptide. Active against some Gram-negative and a variety of Gram-positive bacterial strains. Active against fungus C.glabrata 090902 but not against C.neoformans 201211. Shows hemolytic activity against human erythrocytes. The chain is Jingdongin-1-MT1 from Amolops mantzorum (Sichuan torrent frog).